A 282-amino-acid chain; its full sequence is MANQLILLKKDFFTDEQQAVTVADRYPQDVFAEHTHEFCELVMVWRGNGLHVLNERPYRITRGDLFYIRAEDKHSYTSVNDLVLQNIIYCPERLKLNINWQAMIPGFQGAQWHPHWRLGSMGMNQARQVINQLEHESNGRDPLANEMAELLFGQLVMTLKRHRYATDDLPATSRETLLDKLITALANSLECPFALDAFCQQEQCSERVLRQQFRAQTGMTINQYLRQVRICHAQYLLQHSPLMISEISMQCGFEDSNYFSVVFTRETGMTPSQWRHLSNQSD.

Residues 179–277 (DKLITALANS…GMTPSQWRHL (99 aa)) enclose the HTH araC/xylS-type domain. 2 consecutive DNA-binding regions (H-T-H motif) follow at residues 196–217 (DAFC…RAQT) and 244–267 (ISEI…TRET).

In terms of assembly, binds DNA as a dimer.

Its subcellular location is the cytoplasm. Functionally, activates expression of the rhaSR operon in response to L-rhamnose. In Salmonella agona (strain SL483), this protein is HTH-type transcriptional activator RhaR.